A 127-amino-acid polypeptide reads, in one-letter code: Large ribosomal subunit protein bL19 (127 aa).

It belongs to the bacterial ribosomal protein bL19 family.

This protein is located at the 30S-50S ribosomal subunit interface and may play a role in the structure and function of the aminoacyl-tRNA binding site. The sequence is that of Large ribosomal subunit protein bL19 from Ruegeria pomeroyi (strain ATCC 700808 / DSM 15171 / DSS-3) (Silicibacter pomeroyi).